Here is a 224-residue protein sequence, read N- to C-terminus: RNA-free ribonuclease P (224 aa).

The protein belongs to the HARP family.

It carries out the reaction Endonucleolytic cleavage of RNA, removing 5'-extranucleotides from tRNA precursor.. RNA-free RNase P that catalyzes the removal of the 5'-leader sequence from pre-tRNA to produce the mature 5'-terminus. The chain is RNA-free ribonuclease P from Haloarcula marismortui (strain ATCC 43049 / DSM 3752 / JCM 8966 / VKM B-1809) (Halobacterium marismortui).